The primary structure comprises 226 residues: Transmembrane protein 204 (226 aa).

The Cytoplasmic segment spans residues 1-5 (MTVQR). The chain crosses the membrane as a helical span at residues 6–26 (LVAAAVLVALVSLILNNVAAF). The Extracellular portion of the chain corresponds to 27-103 (TSNWVCQTLE…LQFDMMRACN (77 aa)). Residues 104-124 (LVATAALTAGQLTFLLGLVGL) form a helical membrane-spanning segment. The Cytoplasmic segment spans residues 125–136 (PLLSPDAPCWEE). A helical transmembrane segment spans residues 137–157 (AMAAAFQLASFVLVIGLVTFY). Residues 158 to 170 (RIGPYTNLSWSCY) are Extracellular-facing. The N-linked (GlcNAc...) asparagine glycan is linked to asparagine 164. The chain crosses the membrane as a helical span at residues 171–191 (LNIGACLLATLAAAMLIWNIL). Residues 192 to 226 (HKREDCMAPRVIVISRSLTARFRRGLDNDYVESPC) are Cytoplasmic-facing.

In terms of tissue distribution, highly expressed in lung, heart, kidney and placenta. Lower expression in thymus, spleen, liver, testis and ovary. Expressed in endothelial and restricted epithelial cell populations.

It is found in the cell junction. The protein resides in the adherens junction. It localises to the cell membrane. In terms of biological role, can influence paracellular permeability. Appears to be involved in cell-cell interactions through adherens. In Homo sapiens (Human), this protein is Transmembrane protein 204 (TMEM204).